The primary structure comprises 374 residues: Multicilin (374 aa).

Disordered stretches follow at residues 18-72 (CPNR…ALPA) and 84-105 (CSSFLGSDPPPGGDSAASQSHS). Positions 168 to 216 (EQYWKEVADQNQRALGDALIENNQLHATLTQKQEEIASLKERNLQLKEL) form a coiled coil. Residues 284–306 (LQSRDPKRLRLQPEPQSLDRRPG) form a disordered region.

The protein belongs to the geminin family. As to quaternary structure, heterodimer (via coiled-coil domain) with GMNN (via coiled-coil domain); targets GMNN to the nucleus. Can form homodimers (in vitro, via coiled-coil domain), but these are much less stable than the heterodimer formed with GMNN.

The protein localises to the nucleus. Its function is as follows. Transcription regulator specifically required for multiciliate cell differentiation. Acts in a multiprotein complex containing E2F4 and E2F5 that binds and activates genes required for centriole biogenesis. Required for the deuterosome-mediated acentriolar pathway. Plays a role in mitotic cell cycle progression by promoting cell cycle exit. Modulates GMNN activity by reducing its affinity for CDT1. The protein is Multicilin (MCIDAS) of Bos taurus (Bovine).